The chain runs to 100 residues: Large ribosomal subunit protein bL27 (100 aa).

A propeptide spanning residues 1–13 (MNKLYWLTDLQLF) is cleaved from the precursor. The span at 18–29 (GVDSSKNGRDSN) shows a compositional bias: basic and acidic residues. The tract at residues 18–39 (GVDSSKNGRDSNPKYLGAKLGD) is disordered.

The protein belongs to the bacterial ribosomal protein bL27 family. In terms of processing, the N-terminus is cleaved by ribosomal processing cysteine protease Prp.

The protein is Large ribosomal subunit protein bL27 of Ureaplasma urealyticum serovar 10 (strain ATCC 33699 / Western).